Here is a 234-residue protein sequence, read N- to C-terminus: N-acetyl-alpha-D-glucosaminyl L-malate deacetylase 1 (234 aa).

Positions 12, 15, and 113 each coordinate Zn(2+).

The protein belongs to the PIGL family. Homohexamer. Trimer of dimers. It depends on Zn(2+) as a cofactor.

It catalyses the reaction (S)-malyl N-acetyl-alpha-D-glucosaminide + H2O = (S)-malyl alpha-D-glucosaminide + acetate. Functionally, involved in bacillithiol (BSH) biosynthesis. Catalyzes the second step of the pathway, the deacetylation of N-acetylglucosaminylmalate (GlcNAc-Mal) to glucosamine malate (GlcN-Mal). The protein is N-acetyl-alpha-D-glucosaminyl L-malate deacetylase 1 of Bacillus cereus (strain ATCC 14579 / DSM 31 / CCUG 7414 / JCM 2152 / NBRC 15305 / NCIMB 9373 / NCTC 2599 / NRRL B-3711).